Here is a 507-residue protein sequence, read N- to C-terminus: Probable lipid II flippase MurJ (507 aa).

Helical transmembrane passes span Leu3–Val23, Ile54–Ile74, Leu92–Ile112, Ile132–Ser152, Phe156–Ile176, Ile185–Cys205, Ile268–Met288, Ile310–Thr330, Ile351–Phe371, Thr379–Met399, Ile405–Tyr425, Ile438–Leu458, and Leu472–Gly492.

This sequence belongs to the MurJ/MviN family.

It is found in the cell inner membrane. Its pathway is cell wall biogenesis; peptidoglycan biosynthesis. Its function is as follows. Involved in peptidoglycan biosynthesis. Transports lipid-linked peptidoglycan precursors from the inner to the outer leaflet of the cytoplasmic membrane. This chain is Probable lipid II flippase MurJ, found in Rickettsia prowazekii (strain Madrid E).